Here is a 239-residue protein sequence, read N- to C-terminus: Ribose-5-phosphate isomerase A (239 aa).

Substrate contacts are provided by residues 40–43 (SGST), 96–99 (DGAD), and 110–113 (KGGG). Residue glutamate 119 is the Proton acceptor of the active site. Lysine 137 serves as a coordination point for substrate.

It belongs to the ribose 5-phosphate isomerase family. As to quaternary structure, homodimer.

It carries out the reaction aldehydo-D-ribose 5-phosphate = D-ribulose 5-phosphate. The protein operates within carbohydrate degradation; pentose phosphate pathway; D-ribose 5-phosphate from D-ribulose 5-phosphate (non-oxidative stage): step 1/1. Its function is as follows. Catalyzes the reversible conversion of ribose-5-phosphate to ribulose 5-phosphate. In Methanococcus maripaludis (strain DSM 14266 / JCM 13030 / NBRC 101832 / S2 / LL), this protein is Ribose-5-phosphate isomerase A.